Consider the following 192-residue polypeptide: MIYQKQRNTAETQLNISISDDQSPSHINTGVGFLNHMLTLFTFHSGLSLNIEAQGDIDVDDHHVTEDIGIVIGQLLLEMIKDKKHFVRYGTMYIPMDETLARVVVDISGRPYLSFNATLSKEKVGTFDTELVEEFFRAVVINARLTTHIDLIRGGNTHHEIEAIFKAFSRALGIALTATDDQRVPSSKGVIE.

This sequence belongs to the imidazoleglycerol-phosphate dehydratase family.

Its subcellular location is the cytoplasm. It carries out the reaction D-erythro-1-(imidazol-4-yl)glycerol 3-phosphate = 3-(imidazol-4-yl)-2-oxopropyl phosphate + H2O. It functions in the pathway amino-acid biosynthesis; L-histidine biosynthesis; L-histidine from 5-phospho-alpha-D-ribose 1-diphosphate: step 6/9. This Staphylococcus aureus (strain bovine RF122 / ET3-1) protein is Imidazoleglycerol-phosphate dehydratase.